Consider the following 878-residue polypeptide: Ecdysone receptor (878 aa).

2 disordered regions span residues 1 to 27 (MKRR…SSSN) and 209 to 254 (GLGM…SKKG). The modulating stretch occupies residues 1-263 (MKRRWSNNGG…GPAPRVQEEL (263 aa)). 2 consecutive NR C4-type zinc fingers follow at residues 264-284 (CLVC…CEGC) and 300-324 (CKFG…LKKC). The nuclear receptor DNA-binding region spans 264 to 336 (CLVCGDRASG…VGMRPECVVP (73 aa)). The disordered stretch occupies residues 344–374 (RREKKAQKEKDKMTTSPSSQHGGNGSLASGG). Residues 365 to 374 (GGNGSLASGG) show a composition bias toward gly residues. The NR LBD domain occupies 419–654 (NQLAVIYKLI…FLEEIWDVHA (236 aa)). Low complexity-rich tracts occupy residues 698 to 709 (TSAAAAAAQHQP) and 728 to 759 (QTQP…QLQP). The tract at residues 698–759 (TSAAAAAAQH…QPQLQTQLQP (62 aa)) is disordered.

It belongs to the nuclear hormone receptor family. NR1 subfamily. In terms of assembly, heterodimer of USP and ECR. Only the heterodimer is capable of high-affinity binding to ecdysone. Interacts with trr in an ecdysone-dependent manner. Upon ecdysone stimulation, interacts with Nup98. In terms of tissue distribution, isoform B1 predominates over isoform A in larval tissues, imaginal histoblast nests and midgut islands. Isoform A predominates over B1 in imaginal disks, and the larval prothoracic gland.

The protein resides in the nucleus. Receptor for ecdysone. Binds to ecdysone response elements (ECRES) following ecdysone-binding, and recruitment of a complex containing the histone methyltransferase trr, leads to activate transcription of target genes. This chain is Ecdysone receptor (EcR), found in Drosophila melanogaster (Fruit fly).